The chain runs to 163 residues: NADH-quinone oxidoreductase subunit I (163 aa).

4Fe-4S ferredoxin-type domains follow at residues 54-84 (LRRY…IESD) and 94-123 (TRYD…ETHI). Residues Cys64, Cys67, Cys70, Cys74, Cys103, Cys106, Cys109, and Cys113 each contribute to the [4Fe-4S] cluster site.

Belongs to the complex I 23 kDa subunit family. As to quaternary structure, NDH-1 is composed of 14 different subunits. Subunits NuoA, H, J, K, L, M, N constitute the membrane sector of the complex. It depends on [4Fe-4S] cluster as a cofactor.

It is found in the cell inner membrane. It carries out the reaction a quinone + NADH + 5 H(+)(in) = a quinol + NAD(+) + 4 H(+)(out). Functionally, NDH-1 shuttles electrons from NADH, via FMN and iron-sulfur (Fe-S) centers, to quinones in the respiratory chain. The immediate electron acceptor for the enzyme in this species is believed to be ubiquinone. Couples the redox reaction to proton translocation (for every two electrons transferred, four hydrogen ions are translocated across the cytoplasmic membrane), and thus conserves the redox energy in a proton gradient. The sequence is that of NADH-quinone oxidoreductase subunit I from Ralstonia nicotianae (strain ATCC BAA-1114 / GMI1000) (Ralstonia solanacearum).